The following is a 386-amino-acid chain: Probable protein phosphatase 2C 36 (386 aa).

Positions 60–363 (ELSVAVVQGN…DDITVIVLFI (304 aa)) constitute a PPM-type phosphatase domain. 4 residues coordinate Mn(2+): D94, G95, D295, and D354.

Belongs to the PP2C family. The cofactor is Mg(2+). Mn(2+) serves as cofactor.

It carries out the reaction O-phospho-L-seryl-[protein] + H2O = L-seryl-[protein] + phosphate. The enzyme catalyses O-phospho-L-threonyl-[protein] + H2O = L-threonyl-[protein] + phosphate. This is Probable protein phosphatase 2C 36 from Oryza sativa subsp. japonica (Rice).